Reading from the N-terminus, the 450-residue chain is D-inositol 3-phosphate glycosyltransferase (450 aa).

A 1D-myo-inositol 3-phosphate-binding site is contributed by histidine 26. Residues 32-33 and glycine 40 each bind UDP-N-acetyl-alpha-D-glucosamine; that span reads QP. 1D-myo-inositol 3-phosphate is bound by residues 37–42, lysine 95, tyrosine 128, threonine 152, and arginine 172; that span reads DAGGMN. Residues arginine 246, lysine 251, and glutamine 313 each contribute to the UDP-N-acetyl-alpha-D-glucosamine site. Mg(2+) is bound by residues tyrosine 322, arginine 323, and alanine 325. UDP-N-acetyl-alpha-D-glucosamine is bound by residues glutamate 335 and glutamate 343. Threonine 349 serves as a coordination point for Mg(2+).

This sequence belongs to the glycosyltransferase group 1 family. MshA subfamily. Homodimer.

It carries out the reaction 1D-myo-inositol 3-phosphate + UDP-N-acetyl-alpha-D-glucosamine = 1D-myo-inositol 2-acetamido-2-deoxy-alpha-D-glucopyranoside 3-phosphate + UDP + H(+). Its function is as follows. Catalyzes the transfer of a N-acetyl-glucosamine moiety to 1D-myo-inositol 3-phosphate to produce 1D-myo-inositol 2-acetamido-2-deoxy-glucopyranoside 3-phosphate in the mycothiol biosynthesis pathway. This is D-inositol 3-phosphate glycosyltransferase from Mycolicibacterium vanbaalenii (strain DSM 7251 / JCM 13017 / BCRC 16820 / KCTC 9966 / NRRL B-24157 / PYR-1) (Mycobacterium vanbaalenii).